We begin with the raw amino-acid sequence, 239 residues long: Lytic polysaccharide monooxygenase-like protein X325 (239 aa).

Positions 1 to 24 are cleaved as a signal peptide; that stretch reads MVLPSSVSQWAALIALLCAGLANA. A Cu(2+)-binding site is contributed by histidine 25. Residues asparagine 41, asparagine 56, asparagine 79, asparagine 117, asparagine 150, and asparagine 197 are each glycosylated (N-linked (GlcNAc...) asparagine). Disulfide bonds link cysteine 71-cysteine 176 and cysteine 141-cysteine 195. Serine 214 carries GPI-anchor amidated serine lipidation. Residues 215–239 constitute a propeptide, removed in mature form; the sequence is AAAPKSSLMSVLPVYMVALLSWAMM.

Belongs to the X325 family. It depends on Cu(2+) as a cofactor.

It is found in the cell membrane. Functionally, lytic polysaccharide monooxygenase-like protein that has diverged to biological functions other than polysaccharide degradation since it does not perform oxidative cleavage of polysaccharides. Acts as a cell surface-bound protein that functions in the copper-accumulation pathway. May also act as the major cell wall sensor that regulates MAP kinase-dependent hyphal anastomosis, the fusion of hyphal cells. The sequence is that of Lytic polysaccharide monooxygenase-like protein X325 from Aspergillus fumigatus (strain ATCC MYA-4609 / CBS 101355 / FGSC A1100 / Af293) (Neosartorya fumigata).